We begin with the raw amino-acid sequence, 297 residues long: Phosphatidylserine decarboxylase proenzyme (297 aa).

Catalysis depends on charge relay system; for autoendoproteolytic cleavage activity residues Asp92, His149, and Ser254. Ser254 (schiff-base intermediate with substrate; via pyruvic acid; for decarboxylase activity) is an active-site residue. At Ser254 the chain carries Pyruvic acid (Ser); by autocatalysis.

It belongs to the phosphatidylserine decarboxylase family. PSD-B subfamily. Prokaryotic type I sub-subfamily. In terms of assembly, heterodimer of a large membrane-associated beta subunit and a small pyruvoyl-containing alpha subunit. It depends on pyruvate as a cofactor. Post-translationally, is synthesized initially as an inactive proenzyme. Formation of the active enzyme involves a self-maturation process in which the active site pyruvoyl group is generated from an internal serine residue via an autocatalytic post-translational modification. Two non-identical subunits are generated from the proenzyme in this reaction, and the pyruvate is formed at the N-terminus of the alpha chain, which is derived from the carboxyl end of the proenzyme. The autoendoproteolytic cleavage occurs by a canonical serine protease mechanism, in which the side chain hydroxyl group of the serine supplies its oxygen atom to form the C-terminus of the beta chain, while the remainder of the serine residue undergoes an oxidative deamination to produce ammonia and the pyruvoyl prosthetic group on the alpha chain. During this reaction, the Ser that is part of the protease active site of the proenzyme becomes the pyruvoyl prosthetic group, which constitutes an essential element of the active site of the mature decarboxylase.

The protein resides in the cell membrane. The enzyme catalyses a 1,2-diacyl-sn-glycero-3-phospho-L-serine + H(+) = a 1,2-diacyl-sn-glycero-3-phosphoethanolamine + CO2. It participates in phospholipid metabolism; phosphatidylethanolamine biosynthesis; phosphatidylethanolamine from CDP-diacylglycerol: step 2/2. In terms of biological role, catalyzes the formation of phosphatidylethanolamine (PtdEtn) from phosphatidylserine (PtdSer). In Bordetella bronchiseptica (strain ATCC BAA-588 / NCTC 13252 / RB50) (Alcaligenes bronchisepticus), this protein is Phosphatidylserine decarboxylase proenzyme.